Here is a 198-residue protein sequence, read N- to C-terminus: A-type ATP synthase subunit E (198 aa).

This sequence belongs to the V-ATPase E subunit family. Has multiple subunits with at least A(3), B(3), C, D, E, F, H, I and proteolipid K(x).

It localises to the cell membrane. Component of the A-type ATP synthase that produces ATP from ADP in the presence of a proton gradient across the membrane. This chain is A-type ATP synthase subunit E, found in Pyrococcus furiosus (strain ATCC 43587 / DSM 3638 / JCM 8422 / Vc1).